A 467-amino-acid polypeptide reads, in one-letter code: MNDVDIKTREYTTVSEVAGPLMVVQGVEGAAYNEIVEIETPAGENRTGQVLEVKEDIAVVQVFEGTSDLNTESTKVRFTGETAKIGLSTDMLGRIFNGIGKPIDGGPDIIPDQELDVNGSPMNPSAREFPAEFIQTGISTIDGMNTLVRGQKLPIFSGSGLPHNELAAQIARQAKVIAEDSEFAVIFGAMGITHEEANFFMNEFEQTGALERVTVFMNLADDPAIERIMTPKMALTTAEYLAFEKGMHVLVILTDITNYCEALREISSARNEVPGRRGYPGYMYTDLAGMYERAGRINGKEGSITQMPILVMPQDDITHPIPDLTGYITEGQVVLSRELDRTGIYPPVDVLPSLSRLMSGGIGEGRTREDHSGVSDQLYAAYAEGRDLRDLTAVVGEEALTDRDRKFLKFADEFEDKFIRQSKDEDRSIQETLDLGWKLLSILPKTELKRVKDQYVEQYLPQSETEE.

Belongs to the ATPase alpha/beta chains family. Has multiple subunits with at least A(3), B(3), C, D, E, F, H, I and proteolipid K(x).

It is found in the cell membrane. In terms of biological role, component of the A-type ATP synthase that produces ATP from ADP in the presence of a proton gradient across the membrane. The B chain is a regulatory subunit. The polypeptide is A-type ATP synthase subunit B (Methanosphaera stadtmanae (strain ATCC 43021 / DSM 3091 / JCM 11832 / MCB-3)).